A 503-amino-acid polypeptide reads, in one-letter code: ATP synthase subunit alpha (503 aa).

Residue 169–176 coordinates ATP; it reads GDRSTGKT.

The protein belongs to the ATPase alpha/beta chains family. As to quaternary structure, F-type ATPases have 2 components, CF(1) - the catalytic core - and CF(0) - the membrane proton channel. CF(1) has five subunits: alpha(3), beta(3), gamma(1), delta(1), epsilon(1). CF(0) has three main subunits: a(1), b(2) and c(9-12). The alpha and beta chains form an alternating ring which encloses part of the gamma chain. CF(1) is attached to CF(0) by a central stalk formed by the gamma and epsilon chains, while a peripheral stalk is formed by the delta and b chains.

The protein localises to the cell membrane. It carries out the reaction ATP + H2O + 4 H(+)(in) = ADP + phosphate + 5 H(+)(out). Produces ATP from ADP in the presence of a proton gradient across the membrane. The alpha chain is a regulatory subunit. The protein is ATP synthase subunit alpha of Dehalococcoides mccartyi (strain ATCC BAA-2100 / JCM 16839 / KCTC 5957 / BAV1).